Reading from the N-terminus, the 165-residue chain is Transcriptional repressor NrdR (165 aa).

A zinc finger spans residues 3 to 34; sequence CPFCRHPDSRVVDSREADEGQAIRRRRSCPEC. Residues 46–136 enclose the ATP-cone domain; the sequence is LSVVKRSGVT…VYKSFSSAAD (91 aa).

It belongs to the NrdR family. Zn(2+) serves as cofactor.

Negatively regulates transcription of bacterial ribonucleotide reductase nrd genes and operons by binding to NrdR-boxes. The sequence is that of Transcriptional repressor NrdR from Rhodococcus erythropolis (strain PR4 / NBRC 100887).